Reading from the N-terminus, the 179-residue chain is uncharacterized protein (179 aa).

Its subcellular location is the plastid. The protein resides in the cyanelle. This is an uncharacterized protein from Cyanophora paradoxa.